The chain runs to 145 residues: D-aminoacyl-tRNA deacylase (145 aa).

The Gly-cisPro motif, important for rejection of L-amino acids signature appears at Gly137–Pro138.

This sequence belongs to the DTD family. In terms of assembly, homodimer.

It is found in the cytoplasm. It catalyses the reaction glycyl-tRNA(Ala) + H2O = tRNA(Ala) + glycine + H(+). It carries out the reaction a D-aminoacyl-tRNA + H2O = a tRNA + a D-alpha-amino acid + H(+). In terms of biological role, an aminoacyl-tRNA editing enzyme that deacylates mischarged D-aminoacyl-tRNAs. Also deacylates mischarged glycyl-tRNA(Ala), protecting cells against glycine mischarging by AlaRS. Acts via tRNA-based rather than protein-based catalysis; rejects L-amino acids rather than detecting D-amino acids in the active site. By recycling D-aminoacyl-tRNA to D-amino acids and free tRNA molecules, this enzyme counteracts the toxicity associated with the formation of D-aminoacyl-tRNA entities in vivo and helps enforce protein L-homochirality. This Yersinia pestis bv. Antiqua (strain Antiqua) protein is D-aminoacyl-tRNA deacylase.